The primary structure comprises 178 residues: Probable chorismate pyruvate-lyase (178 aa).

Positions 72, 110, and 169 each coordinate substrate.

The protein belongs to the UbiC family.

It is found in the cytoplasm. It catalyses the reaction chorismate = 4-hydroxybenzoate + pyruvate. The protein operates within cofactor biosynthesis; ubiquinone biosynthesis. Its function is as follows. Removes the pyruvyl group from chorismate, with concomitant aromatization of the ring, to provide 4-hydroxybenzoate (4HB) for the ubiquinone pathway. The polypeptide is Probable chorismate pyruvate-lyase (Nitrosomonas eutropha (strain DSM 101675 / C91 / Nm57)).